The sequence spans 144 residues: Protein WAP-3 (144 aa).

A signal peptide spans 1 to 21 (MRSRSFLVLVAVFLICETLVA). Positions 28–49 (RGPKGQGQDPVEGQDQDEGQGP) are disordered. Residue G34 is a region of interest, 8 X 6 AA approximate tandem repeats. A run of 8 repeats spans residues 34–39 (GQDPVE), 40–45 (GQDQDE), 46–51 (GQGPVK), 58–63 (GQDLVK), 64–69 (GQDPVE), 70–75 (GQDPVK), 76–81 (AQLPDK), and 82–87 (VQDPVK). Residues 64–85 (GQDPVEGQDPVKAQLPDKVQDP) form a disordered region. The WAP domain occupies 97–144 (LFPKPGVCPKIIFCPLVNPPIKCWRDSHCPGVKKCCPSLCGKGCVTPR). 4 cysteine pairs are disulfide-bonded: C104–C132, C110–C136, C119–C131, and C125–C140.

In terms of tissue distribution, large intestine (relatively low levels).

The sequence is that of Protein WAP-3 from Sus scrofa (Pig).